An 886-amino-acid chain; its full sequence is Vam6/Vps39-like protein (886 aa).

A CNH domain is found at 15 to 294 (PLQIDCLAAW…RFITSGGSNI (280 aa)). Residues 573 to 750 (FTEDLPEVES…LLRMYLSPPS (178 aa)) form a CHCR repeat.

It belongs to the VAM6/VPS39 family. As to quaternary structure, homooligomer. Interacts with TGFBR2 and, less efficiently, with TGFBR1; interaction with TGFBR2 is independent of the receptor kinase activity and of the presence of TGF-beta. Also interacts with ACVR2B, but not with BMPR2. Interacts with SMAD4, preferentially following TGF-beta treatment. Component of the putative homotypic fusion and vacuole protein sorting (HOPS) complex; the core of which composed of the class C Vps proteins VPS11, VPS16, VPS18 and VPS33A, is associated with VPS39 and VPS41. Interacts with PLEKHM2; involved in VPS39 recruitment to ARL8B-containing lysosomes. Associates with adapter protein complex 3 (AP-3) and clathrin:AP-3 complexes. Interacts with STX17; this interaction is increased in the absence of TMEM39A. Interacts with RAB7, RAB2A and RAB2B. Interacts with RAB2A (GTP-bound); the interaction contributes to obtaining a functional HOPS complex that promotes autophagosome-lysosome membrane fusion driven by STX17-SNAP29-VAMP8. Interacts with RAB39A (GTP-bound) and RAB39B (GTP-bound); interaction with RAB39A contributes to obtaining a functional HOPS complex.

It localises to the cytoplasm. Its subcellular location is the lysosome membrane. The protein resides in the late endosome membrane. Functionally, regulator of TGF-beta/activin signaling, inhibiting SMAD3- and activating SMAD2-dependent transcription. Acts by interfering with SMAD3/SMAD4 complex formation, this would lead to inhibition of SMAD3-dependent transcription and relieve SMAD3 inhibition of SMAD2-dependent promoters, thus increasing SMAD2-dependent transcription. Its function is as follows. Plays a role in vesicle-mediated protein trafficking to lysosomal compartments including the endocytic membrane transport and autophagic pathways. Acts as a component of the HOPS endosomal tethering complex which is proposed to be involved in the Rab5-to-Rab7 endosome conversion probably implicating MON1A/B, and via binding SNAREs and SNARE complexes to mediate tethering and docking events during SNARE-mediated membrane fusion. The HOPS complex is proposed to be recruited to Rab7 on the late endosomal membrane and to regulate late endocytic, phagocytic and autophagic traffic towards lysosomes. Involved in homotypic vesicle fusions between late endosomes and in heterotypic fusions between late endosomes and lysosomes. Required for fusion of endosomes and autophagosomes with lysosomes. In Mus musculus (Mouse), this protein is Vam6/Vps39-like protein.